Here is a 403-residue protein sequence, read N- to C-terminus: Acetylornithine aminotransferase (403 aa).

Residues 101–102 (GA) and Phe-134 each bind pyridoxal 5'-phosphate. Arg-137 lines the N(2)-acetyl-L-ornithine pocket. A pyridoxal 5'-phosphate-binding site is contributed by 219-222 (DEVQ). Lys-248 carries the N6-(pyridoxal phosphate)lysine modification. Residue Thr-276 coordinates N(2)-acetyl-L-ornithine. Residue Thr-277 coordinates pyridoxal 5'-phosphate.

The protein belongs to the class-III pyridoxal-phosphate-dependent aminotransferase family. ArgD subfamily. Homodimer. Requires pyridoxal 5'-phosphate as cofactor.

The protein localises to the cytoplasm. The enzyme catalyses N(2)-acetyl-L-ornithine + 2-oxoglutarate = N-acetyl-L-glutamate 5-semialdehyde + L-glutamate. It functions in the pathway amino-acid biosynthesis; L-arginine biosynthesis; N(2)-acetyl-L-ornithine from L-glutamate: step 4/4. This Brucella melitensis biotype 1 (strain ATCC 23456 / CCUG 17765 / NCTC 10094 / 16M) protein is Acetylornithine aminotransferase.